The primary structure comprises 446 residues: Probable glycine dehydrogenase (decarboxylating) subunit 1 (446 aa).

Belongs to the GcvP family. N-terminal subunit subfamily. In terms of assembly, the glycine cleavage system is composed of four proteins: P, T, L and H. In this organism, the P 'protein' is a heterodimer of two subunits.

The enzyme catalyses N(6)-[(R)-lipoyl]-L-lysyl-[glycine-cleavage complex H protein] + glycine + H(+) = N(6)-[(R)-S(8)-aminomethyldihydrolipoyl]-L-lysyl-[glycine-cleavage complex H protein] + CO2. In terms of biological role, the glycine cleavage system catalyzes the degradation of glycine. The P protein binds the alpha-amino group of glycine through its pyridoxal phosphate cofactor; CO(2) is released and the remaining methylamine moiety is then transferred to the lipoamide cofactor of the H protein. This chain is Probable glycine dehydrogenase (decarboxylating) subunit 1, found in Coxiella burnetii (strain CbuK_Q154) (Coxiella burnetii (strain Q154)).